The sequence spans 282 residues: Stress response regulator protein 1 (282 aa).

Composition is skewed to low complexity over residues 12 to 30 and 45 to 58; these read NLSR…HSST and NSQS…SNNN. Disordered stretches follow at residues 12–31, 43–84, and 112–139; these read NLSR…SSTV, DINS…DDED, and LTPF…TTVV. The segment covering 66–77 has biased composition (polar residues); that stretch reads SDYNSYTHNQYY. The segment covering 125–139 has biased composition (low complexity); sequence SIISSKSSNKSTTVV. The Response regulatory domain occupies 155-273; that stretch reads SFLIVDDNII…LDFMANSIDD (119 aa). At aspartate 206 the chain carries 4-aspartylphosphate.

Its function is as follows. Required for stress adaptation, morphogenesis and virulence. This is Stress response regulator protein 1 (SRR1) from Candida albicans (strain SC5314 / ATCC MYA-2876) (Yeast).